The sequence spans 485 residues: Delta(14)-sterol reductase (485 aa).

Helical transmembrane passes span 18–38, 77–97, 131–151, 155–175, and 319–339; these read FFGPPGAFAISFLLPVLVYVF, GLVSWEASAATAGYILLSLIL, LAILAAGTAAQGAEFPVWTFI, FIQILTANTIFSYAVATFVYV, and SLGPVGLAVMLSLIGLGFYIF. Residues lysine 346, arginine 350, leucine 373, tryptophan 378, and 385–386 each bind NADP(+); that span reads NY. Residues 431–451 traverse the membrane as a helical segment; the sequence is AKGWGMLITYFYILYFAILLI. NADP(+) is bound by residues aspartate 457, 461–465, and tyrosine 472; that span reads CHRKY.

The protein belongs to the ERG4/ERG24 family.

It is found in the membrane. The catalysed reaction is 4,4-dimethyl-5alpha-cholesta-8,24-dien-3beta-ol + NADP(+) = 4,4-dimethyl-5alpha-cholesta-8,14,24-trien-3beta-ol + NADPH + H(+). The protein operates within steroid biosynthesis; zymosterol biosynthesis; zymosterol from lanosterol: step 2/6. In terms of biological role, reduces the C14=C15 double bond of 4,4-dimethyl-cholesta-8,14,24-trienol to produce 4,4-dimethyl-cholesta-8,24-dienol. This chain is Delta(14)-sterol reductase, found in Fusarium vanettenii (Neocosmospora pisi).